Here is a 241-residue protein sequence, read N- to C-terminus: Adenosylcobinamide-GDP ribazoletransferase (241 aa).

Transmembrane regions (helical) follow at residues 24 to 44 (IVFF…SIFY), 48 to 68 (FINQ…IYGF), 103 to 123 (VVTF…FNSI), 175 to 195 (VIIL…FSLI), and 218 to 238 (IIGF…LISF).

This sequence belongs to the CobS family. Requires Mg(2+) as cofactor.

The protein resides in the cell membrane. It catalyses the reaction alpha-ribazole + adenosylcob(III)inamide-GDP = adenosylcob(III)alamin + GMP + H(+). The catalysed reaction is alpha-ribazole 5'-phosphate + adenosylcob(III)inamide-GDP = adenosylcob(III)alamin 5'-phosphate + GMP + H(+). It functions in the pathway cofactor biosynthesis; adenosylcobalamin biosynthesis; adenosylcobalamin from cob(II)yrinate a,c-diamide: step 7/7. Its function is as follows. Joins adenosylcobinamide-GDP and alpha-ribazole to generate adenosylcobalamin (Ado-cobalamin). Also synthesizes adenosylcobalamin 5'-phosphate from adenosylcobinamide-GDP and alpha-ribazole 5'-phosphate. In Picrophilus torridus (strain ATCC 700027 / DSM 9790 / JCM 10055 / NBRC 100828 / KAW 2/3), this protein is Adenosylcobinamide-GDP ribazoletransferase.